The primary structure comprises 102 residues: Transposable element activator uncharacterized 12 kDa protein (102 aa).

Over residues histidine 24 to histidine 51 the composition is skewed to basic residues. Residues histidine 24–glycine 55 are disordered.

The polypeptide is Transposable element activator uncharacterized 12 kDa protein (Zea mays (Maize)).